The chain runs to 263 residues: Ribonuclease HII (263 aa).

Residues 74 to 262 (EHVAGLDEVG…VQETAATRQT (189 aa)) form the RNase H type-2 domain. Residues aspartate 80, glutamate 81, and aspartate 172 each coordinate a divalent metal cation.

It belongs to the RNase HII family. It depends on Mn(2+) as a cofactor. Mg(2+) is required as a cofactor.

Its subcellular location is the cytoplasm. It catalyses the reaction Endonucleolytic cleavage to 5'-phosphomonoester.. Functionally, endonuclease that specifically degrades the RNA of RNA-DNA hybrids. This chain is Ribonuclease HII (rnhB), found in Halalkalibacterium halodurans (strain ATCC BAA-125 / DSM 18197 / FERM 7344 / JCM 9153 / C-125) (Bacillus halodurans).